A 108-amino-acid polypeptide reads, in one-letter code: UPF0102 protein Shewmr4_3685 (108 aa).

This sequence belongs to the UPF0102 family.

The polypeptide is UPF0102 protein Shewmr4_3685 (Shewanella sp. (strain MR-4)).